A 203-amino-acid polypeptide reads, in one-letter code: Large ribosomal subunit protein uL18 (203 aa).

It belongs to the universal ribosomal protein uL18 family. In terms of assembly, part of the 50S ribosomal subunit. Contacts the 5S and 23S rRNAs.

This is one of the proteins that bind and probably mediate the attachment of the 5S RNA into the large ribosomal subunit, where it forms part of the central protuberance. This chain is Large ribosomal subunit protein uL18, found in Pyrococcus abyssi (strain GE5 / Orsay).